The following is a 210-amino-acid chain: Uridine kinase (210 aa).

An ATP-binding site is contributed by 12-19 (GGSGGGKT).

This sequence belongs to the uridine kinase family.

It localises to the cytoplasm. The catalysed reaction is uridine + ATP = UMP + ADP + H(+). It carries out the reaction cytidine + ATP = CMP + ADP + H(+). Its pathway is pyrimidine metabolism; CTP biosynthesis via salvage pathway; CTP from cytidine: step 1/3. It participates in pyrimidine metabolism; UMP biosynthesis via salvage pathway; UMP from uridine: step 1/1. The chain is Uridine kinase from Streptococcus gordonii (strain Challis / ATCC 35105 / BCRC 15272 / CH1 / DL1 / V288).